The chain runs to 487 residues: b(0,+)-type amino acid transporter 1 (487 aa).

Positions 1–15 (MGDTGLRKRREDEKS) are enriched in basic and acidic residues. The disordered stretch occupies residues 1-22 (MGDTGLRKRREDEKSIQSQEPK). The Cytoplasmic portion of the chain corresponds to 1–31 (MGDTGLRKRREDEKSIQSQEPKTTSLQKELG). Ser18 is subject to Phosphoserine. A helical membrane pass occupies residues 32 to 55 (LISGISIIVGTIIGSGIFVSPKSV). Residue 43–47 (IIGSG) participates in L-arginine binding. The Extracellular segment spans residues 56-62 (LSNTEAV). A helical transmembrane segment spans residues 63 to 84 (GPCLIIWAACGVLATLGALCFA). The Cytoplasmic segment spans residues 85-110 (ELGTMITKSGGEYPYLMEAYGPIPAY). A helical transmembrane segment spans residues 111–137 (LFSWASLIVIKPTSFAIICLSFSEYVC). Residues 138 to 147 (APFYVGCKPP) are Extracellular-facing. Transmembrane regions (helical) follow at residues 148–169 (QIVVKCLAAAAILFISTVNSLS) and 170–193 (VRLGSYVQNIFTAAKLVIVAIIII). The Extracellular segment spans residues 194–217 (SGLVLLAQGNTKNFDNSFEGAQLS). The chain crosses the membrane as a helical span at residues 218-238 (VGAISLAFYNGLWAYDGWNQL). Position 233 (Asp233) interacts with L-arginine. Residues 239-251 (NYITEELRNPYRN) lie on the Cytoplasmic side of the membrane. The helical transmembrane segment at 252–274 (LPLAIIIGIPLVTACYILMNVSY) threads the bilayer. The Extracellular segment spans residues 275–302 (FTVMTATELLQSQAVAVTFGDRVLYPAS). Residues 303-325 (WIVPLFVAFSTIGAANGTCFTAG) traverse the membrane as a helical segment. At 326–351 (RLIYVAGREGHMLKVLSYISVRRLTP) the chain is on the cytoplasmic side. Helical transmembrane passes span 352 to 370 (APAIIFYGIIATIYIIPGD) and 371 to 391 (INSLVNYFSFAAWLFYGLTIL). The Cytoplasmic segment spans residues 392–410 (GLIVMRFTRKELERPIKVP). A helical transmembrane segment spans residues 411–431 (VVIPVLMTLISVFLVLAPIIS). At 432-434 (KPT) the chain is on the extracellular side. The helical transmembrane segment at 435 to 450 (WEYLYCVLFILSGLLF) threads the bilayer. Residues 451-487 (YFLFVHYKFGWAQKISKPITMHLQMLMEVVPPEEDPE) are Cytoplasmic-facing.

This sequence belongs to the amino acid-polyamine-organocation (APC) superfamily. As to quaternary structure, disulfide-linked heterodimer composed of the catalytic light chain subunit SLC7A9 and the heavy chain subunit SLC3A1. The heterodimer is the minimal functional unit. Assembles in heterotetramers (dimers of heterodimers) and higher order oligomers; the oligomerization is mediated by SLC3A1 likely to prevent degradation and facilitate heteromer trafficking to the plasma membrane. Interacts with CAV1. Expressed in the brush border membrane in the kidney (at protein level). Kidney, small intestine, liver and placenta.

The protein resides in the apical cell membrane. It is found in the cell membrane. The catalysed reaction is L-leucine(out) + L-arginine(in) = L-leucine(in) + L-arginine(out). The enzyme catalyses L-histidine(out) + L-arginine(in) = L-histidine(in) + L-arginine(out). It catalyses the reaction L-arginine(in) + L-phenylalanine(out) = L-arginine(out) + L-phenylalanine(in). It carries out the reaction L-cysteine(out) + L-arginine(in) = L-cysteine(in) + L-arginine(out). The catalysed reaction is L-cystine(out) + L-arginine(in) = L-cystine(in) + L-arginine(out). The enzyme catalyses L-lysine(out) + L-arginine(in) = L-lysine(in) + L-arginine(out). Associates with SLC3A1 to form a functional transporter complex that mediates the electrogenic exchange between cationic amino acids and neutral amino acids, with a stoichiometry of 1:1. Has system b(0,+)-like activity with high affinity for extracellular cationic amino acids and L-cystine and lower affinity for intracellular neutral amino acids. Substrate exchange is driven by high concentration of intracellular neutral amino acids and the intracellular reduction of L-cystine to L-cysteine. Required for reabsorption of L-cystine and dibasic amino acids across the brush border membrane in renal proximal tubules. The chain is b(0,+)-type amino acid transporter 1 from Homo sapiens (Human).